Reading from the N-terminus, the 160-residue chain is Putative pre-16S rRNA nuclease (160 aa).

Belongs to the YqgF nuclease family.

It is found in the cytoplasm. Functionally, could be a nuclease involved in processing of the 5'-end of pre-16S rRNA. In Cereibacter sphaeroides (strain KD131 / KCTC 12085) (Rhodobacter sphaeroides), this protein is Putative pre-16S rRNA nuclease.